A 390-amino-acid chain; its full sequence is GTPase Obg/CgtA (390 aa).

Residues 1–159 (MKFVDEAVIK…RDIRLELLLL (159 aa)) form the Obg domain. One can recognise an OBG-type G domain in the interval 160-333 (ADVGMLGMPN…LCMKLAEFMD (174 aa)). GTP is bound by residues 166–173 (GMPNAGKS), 191–195 (FTTLV), 213–216 (DIPG), 283–286 (NKVD), and 314–316 (SAA). Mg(2+) is bound by residues S173 and T193.

It belongs to the TRAFAC class OBG-HflX-like GTPase superfamily. OBG GTPase family. In terms of assembly, monomer. Interacts with SpoT (AC Q9KNM2) in a yeast 2-hybrid assay. It depends on Mg(2+) as a cofactor.

The protein resides in the cytoplasm. Functionally, depletion experiments lead to gene down regulation and a dramatic increase in ppGpp levels, like those seen in the stringent response. There is no change in cell morphology in depletion experiments, but cells are very sensitive to the DNA-damaging agent hydroxyurea and are very elongated. Overexpression reduces growth and leads to elongated cells. Overexpression of proteins with C-terminal deletions of 29 or 62 amino acids showed fewer elongated cells. Its function is as follows. An essential GTPase which binds GTP, GDP and possibly (p)ppGpp with moderate affinity, with high nucleotide exchange rates and a fairly low GTP hydrolysis rate. It may play a role in control of the cell cycle, stress response, ribosome biogenesis and in those bacteria that undergo differentiation, in morphogenesis control. GTPase activity is stimulated by 50S ribosomal subunits. The chain is GTPase Obg/CgtA from Vibrio cholerae serotype O1 (strain ATCC 39315 / El Tor Inaba N16961).